A 263-amino-acid chain; its full sequence is 3-deoxy-manno-octulosonate cytidylyltransferase 1 (263 aa).

This sequence belongs to the KdsB family.

The protein resides in the cytoplasm. The enzyme catalyses 3-deoxy-alpha-D-manno-oct-2-ulosonate + CTP = CMP-3-deoxy-beta-D-manno-octulosonate + diphosphate. Its pathway is nucleotide-sugar biosynthesis; CMP-3-deoxy-D-manno-octulosonate biosynthesis; CMP-3-deoxy-D-manno-octulosonate from 3-deoxy-D-manno-octulosonate and CTP: step 1/1. The protein operates within bacterial outer membrane biogenesis; lipopolysaccharide biosynthesis. In terms of biological role, activates KDO (a required 8-carbon sugar) for incorporation into bacterial lipopolysaccharide in Gram-negative bacteria. This is 3-deoxy-manno-octulosonate cytidylyltransferase 1 from Burkholderia ambifaria (strain MC40-6).